The primary structure comprises 515 residues: Serine/threonine-protein kinase STE7 (515 aa).

The Protein kinase domain occupies 191–466 (LVQLGKIGAG…IHELLHHDLI (276 aa)). ATP is bound by residues 197-205 (IGAGNSGTV) and Lys-220. Catalysis depends on Asp-331, which acts as the Proton acceptor. A Phosphoserine modification is found at Ser-359. Position 363 is a phosphothreonine (Thr-363).

The protein belongs to the protein kinase superfamily. STE Ser/Thr protein kinase family. MAP kinase kinase subfamily.

The enzyme catalyses L-seryl-[protein] + ATP = O-phospho-L-seryl-[protein] + ADP + H(+). It carries out the reaction L-threonyl-[protein] + ATP = O-phospho-L-threonyl-[protein] + ADP + H(+). It catalyses the reaction L-tyrosyl-[protein] + ATP = O-phospho-L-tyrosyl-[protein] + ADP + H(+). Its activity is regulated as follows. Phosphorylated at multiple sites in response to pheromone. In terms of biological role, serine/threonine protein kinase required for cell-type-specific transcription and signal transduction in yeast. It is thought that it is phosphorylated by the ste11 protein kinase and that it can phosphorylate the FUS3 and or KSS1 kinases. This chain is Serine/threonine-protein kinase STE7 (STE7), found in Saccharomyces cerevisiae (strain ATCC 204508 / S288c) (Baker's yeast).